The sequence spans 186 residues: MRLLIMGPQGVGKGTQAALLAEHFNIPTISTGDIFRYNIKNKTELGLEAMSYTDKGELVPDSLTNKIVKDRLAKEDCKNGWILDGYPRNAAQVTALDEMLADLDTPLDHVVALEAARDVLLERMKKRAAEQGRADDTPEAIAKRLETYEKETAPLLDIYEARGLLVVVNGVGDIDEISGRIISHLE.

10-15 (GVGKGT) contacts ATP. Residues 30-59 (STGDIFRYNIKNKTELGLEAMSYTDKGELV) are NMP. AMP contacts are provided by residues Thr-31, Arg-36, 57 to 59 (ELV), 85 to 88 (GYPR), and Gln-92. The LID stretch occupies residues 126–136 (KRAAEQGRADD). Arg-127 contributes to the ATP binding site. Residues Arg-133 and Arg-144 each contribute to the AMP site. Gly-172 contacts ATP.

Belongs to the adenylate kinase family. As to quaternary structure, monomer.

It localises to the cytoplasm. The enzyme catalyses AMP + ATP = 2 ADP. It participates in purine metabolism; AMP biosynthesis via salvage pathway; AMP from ADP: step 1/1. Its function is as follows. Catalyzes the reversible transfer of the terminal phosphate group between ATP and AMP. Plays an important role in cellular energy homeostasis and in adenine nucleotide metabolism. This chain is Adenylate kinase, found in Bifidobacterium longum (strain NCC 2705).